The following is a 514-amino-acid chain: 2-isopropylmalate synthase (514 aa).

The Pyruvate carboxyltransferase domain maps to 5–268 (LIIFDTTLRD…DVGIDTTQIV (264 aa)). Asp-14, His-202, His-204, and Asn-239 together coordinate Mn(2+). The regulatory domain stretch occupies residues 395 to 514 (KFVSLSQHSE…KDDKLNPQRA (120 aa)).

The protein belongs to the alpha-IPM synthase/homocitrate synthase family. LeuA type 1 subfamily. Homodimer. Mn(2+) serves as cofactor.

It is found in the cytoplasm. The enzyme catalyses 3-methyl-2-oxobutanoate + acetyl-CoA + H2O = (2S)-2-isopropylmalate + CoA + H(+). The protein operates within amino-acid biosynthesis; L-leucine biosynthesis; L-leucine from 3-methyl-2-oxobutanoate: step 1/4. In terms of biological role, catalyzes the condensation of the acetyl group of acetyl-CoA with 3-methyl-2-oxobutanoate (2-ketoisovalerate) to form 3-carboxy-3-hydroxy-4-methylpentanoate (2-isopropylmalate). The protein is 2-isopropylmalate synthase of Burkholderia vietnamiensis (strain G4 / LMG 22486) (Burkholderia cepacia (strain R1808)).